The chain runs to 196 residues: Probable GTP-binding protein EngB (196 aa).

The EngB-type G domain occupies 24–196 (ELSEVALSGR…IWNLIEPYIS (173 aa)). Residues 32–39 (GRSNVGKS), 59–63 (GKTQT), 77–80 (DVPG), 144–147 (TKED), and 176–178 (YSS) contribute to the GTP site. 2 residues coordinate Mg(2+): Ser39 and Thr61.

Belongs to the TRAFAC class TrmE-Era-EngA-EngB-Septin-like GTPase superfamily. EngB GTPase family. Requires Mg(2+) as cofactor.

Its function is as follows. Necessary for normal cell division and for the maintenance of normal septation. The sequence is that of Probable GTP-binding protein EngB from Staphylococcus aureus (strain Mu3 / ATCC 700698).